The chain runs to 336 residues: Probable long-chain-alcohol O-fatty-acyltransferase 8 (336 aa).

8 helical membrane passes run 7–27 (SFVKVWGSAIISVSYCYYIPS), 38–58 (SVLPVCVLFLVLPLFFVFTIF), 59–79 (SSTTAFCLSILANFKLILFAF), 82–102 (GPLLPLPANLFRFICFTCLPI), 117–135 (WVFFCKAAIFGVLLNVHNY), 152–172 (LYLVLDVLLTIVNALLTIILG), 228–248 (MGCWTTFFVSGLIHELVYFYI), and 284–304 (PMLSRLITVGFLVVTGYFLFF).

Belongs to the wax synthase family.

The protein localises to the membrane. The enzyme catalyses a long chain fatty alcohol + a fatty acyl-CoA = a wax ester + CoA. Functionally, catalyzes the final step in the synthesis of long-chain linear esters (waxes). The sequence is that of Probable long-chain-alcohol O-fatty-acyltransferase 8 from Arabidopsis thaliana (Mouse-ear cress).